The sequence spans 273 residues: Formamidopyrimidine-DNA glycosylase (273 aa).

The active-site Schiff-base intermediate with DNA is the Pro-2. The active-site Proton donor is the Glu-3. The Proton donor; for beta-elimination activity role is filled by Lys-58. 3 residues coordinate DNA: His-91, Arg-109, and Arg-154. The segment at 239-273 (FCYARTGEPCRICKTPIRQIVQGQRSTFYCPNCQK) adopts an FPG-type zinc-finger fold. Catalysis depends on Arg-263, which acts as the Proton donor; for delta-elimination activity.

The protein belongs to the FPG family. In terms of assembly, monomer. It depends on Zn(2+) as a cofactor.

The enzyme catalyses Hydrolysis of DNA containing ring-opened 7-methylguanine residues, releasing 2,6-diamino-4-hydroxy-5-(N-methyl)formamidopyrimidine.. The catalysed reaction is 2'-deoxyribonucleotide-(2'-deoxyribose 5'-phosphate)-2'-deoxyribonucleotide-DNA = a 3'-end 2'-deoxyribonucleotide-(2,3-dehydro-2,3-deoxyribose 5'-phosphate)-DNA + a 5'-end 5'-phospho-2'-deoxyribonucleoside-DNA + H(+). Its function is as follows. Involved in base excision repair of DNA damaged by oxidation or by mutagenic agents. Acts as a DNA glycosylase that recognizes and removes damaged bases. Has a preference for oxidized purines, such as 7,8-dihydro-8-oxoguanine (8-oxoG). Has AP (apurinic/apyrimidinic) lyase activity and introduces nicks in the DNA strand. Cleaves the DNA backbone by beta-delta elimination to generate a single-strand break at the site of the removed base with both 3'- and 5'-phosphates. In Janthinobacterium sp. (strain Marseille) (Minibacterium massiliensis), this protein is Formamidopyrimidine-DNA glycosylase.